A 580-amino-acid chain; its full sequence is Acyl-coenzyme A synthetase ACSM3, mitochondrial (580 aa).

The N-terminal 21 residues, 1–21 (MVMLLRARCFQRLAIPDPMRV), are a transit peptide targeting the mitochondrion. An N6-succinyllysine mark is found at K67 and K100. An N6-acetyllysine modification is found at K151. ATP is bound by residues 229-237 (TSGTTGPPK), 368-373 (EGYGQT), D455, R470, and K566.

This sequence belongs to the ATP-dependent AMP-binding enzyme family. Mg(2+) serves as cofactor. It depends on Mn(2+) as a cofactor. In terms of tissue distribution, detected in kidney (at protein level). Detected in kidney proximal tubules and in liver. Detected at low levels in testis, stomach, heart and lung.

It is found in the mitochondrion. It localises to the mitochondrion matrix. The enzyme catalyses a medium-chain fatty acid + ATP + CoA = a medium-chain fatty acyl-CoA + AMP + diphosphate. The catalysed reaction is propanoate + ATP + CoA = propanoyl-CoA + AMP + diphosphate. It carries out the reaction butanoate + ATP + CoA = butanoyl-CoA + AMP + diphosphate. It catalyses the reaction 2-methylpropanoate + ATP + CoA = 2-methylpropanoyl-CoA + AMP + diphosphate. The enzyme catalyses 2-methylbutanoate + ATP + CoA = 2-methylbutanoyl-CoA + AMP + diphosphate. The catalysed reaction is octanoate + ATP + CoA = octanoyl-CoA + AMP + diphosphate. Catalyzes the activation of fatty acids by CoA to produce an acyl-CoA, the first step in fatty acid metabolism. Capable of activating medium-chain fatty acids with a preference for isobutyrate among fatty acids with 2-6 carbon atoms. The polypeptide is Acyl-coenzyme A synthetase ACSM3, mitochondrial (Acsm3) (Mus musculus (Mouse)).